We begin with the raw amino-acid sequence, 110 residues long: Late cornified envelope-like proline-rich protein 1 (110 aa).

The tract at residues 1 to 24 (MSSDDKNKPGEPKNEPKQCDPGCE) is disordered.

This sequence belongs to the cornifin (SPRR) family.

The polypeptide is Late cornified envelope-like proline-rich protein 1 (LELP1) (Bos taurus (Bovine)).